Here is a 448-residue protein sequence, read N- to C-terminus: Probable glycine dehydrogenase (decarboxylating) subunit 1 (448 aa).

This sequence belongs to the GcvP family. N-terminal subunit subfamily. The glycine cleavage system is composed of four proteins: P, T, L and H. In this organism, the P 'protein' is a heterodimer of two subunits.

It carries out the reaction N(6)-[(R)-lipoyl]-L-lysyl-[glycine-cleavage complex H protein] + glycine + H(+) = N(6)-[(R)-S(8)-aminomethyldihydrolipoyl]-L-lysyl-[glycine-cleavage complex H protein] + CO2. Functionally, the glycine cleavage system catalyzes the degradation of glycine. The P protein binds the alpha-amino group of glycine through its pyridoxal phosphate cofactor; CO(2) is released and the remaining methylamine moiety is then transferred to the lipoamide cofactor of the H protein. This chain is Probable glycine dehydrogenase (decarboxylating) subunit 1, found in Rhodospirillum rubrum (strain ATCC 11170 / ATH 1.1.1 / DSM 467 / LMG 4362 / NCIMB 8255 / S1).